The sequence spans 106 residues: ATP-dependent Clp protease adapter protein ClpS (106 aa).

It belongs to the ClpS family. As to quaternary structure, binds to the N-terminal domain of the chaperone ClpA.

Functionally, involved in the modulation of the specificity of the ClpAP-mediated ATP-dependent protein degradation. This chain is ATP-dependent Clp protease adapter protein ClpS, found in Cronobacter sakazakii (strain ATCC BAA-894) (Enterobacter sakazakii).